Reading from the N-terminus, the 2397-residue chain is Cell wall alpha-1,3-glucan synthase mok11 (2397 aa).

The segment at 1683–1705 (SNQQSFDFKSSESDSFPQKSPSV) is disordered. Over residues 1687–1698 (SFDFKSSESDSF) the composition is skewed to low complexity.

This sequence belongs to the glycosyltransferase group 1 family.

It carries out the reaction [(1-&gt;3)-alpha-D-glucosyl](n) + UDP-alpha-D-glucose = [(1-&gt;3)-alpha-D-glucosyl](n+1) + UDP + H(+). The polypeptide is Cell wall alpha-1,3-glucan synthase mok11 (mok11) (Schizosaccharomyces pombe (strain 972 / ATCC 24843) (Fission yeast)).